The primary structure comprises 515 residues: Cytoplasmic tRNA 2-thiolation protein 2 (515 aa).

Disordered stretches follow at residues Met-1–Arg-24 and Leu-188–Pro-217. An N-acetylcysteine modification is found at Cys-2. A phosphoserine mark is found at Ser-415, Ser-419, Ser-435, and Ser-508.

Belongs to the CTU2/NCS2 family. In terms of assembly, component of a complex at least composed of URM1, CTU2/NCS2 and CTU1/ATPBD3.

The protein localises to the cytoplasm. The protein operates within tRNA modification; 5-methoxycarbonylmethyl-2-thiouridine-tRNA biosynthesis. Plays a central role in 2-thiolation of mcm(5)S(2)U at tRNA wobble positions of tRNA(Lys), tRNA(Glu) and tRNA(Gln). May act by forming a heterodimer with CTU1/ATPBD3 that ligates sulfur from thiocarboxylated URM1 onto the uridine of tRNAs at wobble position. In Homo sapiens (Human), this protein is Cytoplasmic tRNA 2-thiolation protein 2.